We begin with the raw amino-acid sequence, 114 residues long: Histone H2A.Z-specific chaperone chz-1 (114 aa).

Over residues 1 to 22 (MSTENGTTDTTLAGTAEANTPF) the composition is skewed to polar residues. The disordered stretch occupies residues 1 to 114 (MSTENGTTDT…FVPEDEEMEE (114 aa)). The segment covering 24 to 40 (SKGKGKAAAESEDHPMG) has biased composition (basic and acidic residues). Acidic residues-rich tracts occupy residues 41–68 (EAEDDEDDEDEDETEEPEAEEDNLEEID) and 93–114 (PAEEDDEEDDEEFVPEDEEMEE).

It belongs to the CHZ1 family. As to quaternary structure, forms a heterotrimer with H2A.Z-H2B, stabilizing the association of the histone dimer. Also, with a lower affinity, forms a heterotrimer with H2A-H2B.

Its subcellular location is the nucleus. Functionally, forms a chaperone-bound H2A.Z-H2B complex that acts as a source for SWR1 complex-dependent H2A to H2A.Z histone replacement in chromatin. The sequence is that of Histone H2A.Z-specific chaperone chz-1 (chz-1) from Neurospora crassa (strain ATCC 24698 / 74-OR23-1A / CBS 708.71 / DSM 1257 / FGSC 987).